The primary structure comprises 216 residues: Uracil phosphoribosyltransferase (216 aa).

Residues Arg-85, Arg-110, and 135–143 (DPMVATGYS) each bind 5-phospho-alpha-D-ribose 1-diphosphate. Uracil-binding positions include Ile-200 and 205 to 207 (GDA). Residue Asp-206 participates in 5-phospho-alpha-D-ribose 1-diphosphate binding.

This sequence belongs to the UPRTase family. Mg(2+) is required as a cofactor.

It catalyses the reaction UMP + diphosphate = 5-phospho-alpha-D-ribose 1-diphosphate + uracil. Its pathway is pyrimidine metabolism; UMP biosynthesis via salvage pathway; UMP from uracil: step 1/1. Its activity is regulated as follows. Allosterically activated by GTP. Its function is as follows. Catalyzes the conversion of uracil and 5-phospho-alpha-D-ribose 1-diphosphate (PRPP) to UMP and diphosphate. In Burkholderia pseudomallei (strain 668), this protein is Uracil phosphoribosyltransferase.